The following is an 809-amino-acid chain: METSSIEINELPLATKTQTPPASVEPIPMETSSIDELPSSDSNATDNIEAVGEKRKRADEDEKTNLESSDTKITTPSPWWKTSLCSYFRREASCSHGNECKYAHGEAELRMKPDNTWDPTSERGKKAKAMKMSEHEEKEEDEVLFTEQMMESIDGDEGGGGSVSVVDLSLSKCLVHLPNKWQSDELKKFLGEQGVLYKSAKKRRGMIVGFVTFENAEQLQSGVEILDGKTVNSSNLKIADVLPRTFDKNDARKSVKSARDAVTPLAYLSYADQLEQKKTSIGQMLKKLARNARKACPNGNSLPQWVLTSRDRGGLACNLEGIIESPITNGYRNKCEFSVGLSLQGKPTVGFSLGSFCAGVTAVEEPVDCPNVSKIASQYASIFQKFIENSKFQVWNRFQHSGFWRQLTVREGRKPGVFSNDEDAITRIAEVMLMVQVCLTGSDEAEVATEFEELAKAFAEGARASSPTLPLTVLVVQNHSGISNVAPPDAPLQVLAIPISDNGTDQEQTTNVLTEARIHDHINNLRFSISPTAFFQVNTVTAEKLYSIAGDWADLGPDTLLFDVCCGTGTIGLTLAHRVGMVIGIEMNASAVADAERNATINGISNCKFICSKAEDVMSSLLKQYLDVTQMEEAKPLSNANDDLNKQIPSTEEMTNSEHVADQNLPPSNTQVEELQDNEQKDSSSLEPEKTTKPQFKNVVAIVDPPRSGLHPAVIKALRTHPRLKRLVYISCNPETLVANAIELCTPSFDEPDRGNKNYRGRKKIGIAALARHRAKSMPTSEAFRPVKAMAVDLFPHTDHCEMVMLLER.

An N-acetylmethionine modification is found at methionine 1. The segment at 1 to 74 is disordered; it reads METSSIEINE…NLESSDTKIT (74 aa). Polar residues predominate over residues 30–46; it reads ETSSIDELPSSDSNATD. Positions 51–65 are enriched in basic and acidic residues; sequence VGEKRKRADEDEKTN. The C3H1-type zinc finger occupies 79–107; that stretch reads WWKTSLCSYFRREASCSHGNECKYAHGEA. Residues glutamine 536 and glutamate 586 each contribute to the S-adenosyl-L-methionine site. The disordered stretch occupies residues 652–693; that stretch reads EEMTNSEHVADQNLPPSNTQVEELQDNEQKDSSSLEPEKTTK. The span at 678–692 shows a compositional bias: basic and acidic residues; sequence NEQKDSSSLEPEKTT. Residue aspartate 704 coordinates S-adenosyl-L-methionine. Cysteine 732 (nucleophile) is an active-site residue.

The protein belongs to the class I-like SAM-binding methyltransferase superfamily. RNA M5U methyltransferase family.

The protein is Zinc finger CCCH domain-containing protein 24 of Arabidopsis thaliana (Mouse-ear cress).